Reading from the N-terminus, the 370-residue chain is tRNA-specific 2-thiouridylase MnmA (370 aa).

Residues 8-15 (GMSGGVDS) and methionine 34 contribute to the ATP site. The segment at 104 to 106 (NPD) is interaction with target base in tRNA. Cysteine 109 acts as the Nucleophile in catalysis. Cysteine 109 and cysteine 202 are joined by a disulfide. ATP is bound at residue glycine 134. The tract at residues 152 to 154 (KDQ) is interaction with tRNA. Cysteine 202 (cysteine persulfide intermediate) is an active-site residue. Residues 309–310 (RY) are interaction with tRNA.

The protein belongs to the MnmA/TRMU family.

The protein resides in the cytoplasm. It catalyses the reaction S-sulfanyl-L-cysteinyl-[protein] + uridine(34) in tRNA + AH2 + ATP = 2-thiouridine(34) in tRNA + L-cysteinyl-[protein] + A + AMP + diphosphate + H(+). Its function is as follows. Catalyzes the 2-thiolation of uridine at the wobble position (U34) of tRNA, leading to the formation of s(2)U34. The polypeptide is tRNA-specific 2-thiouridylase MnmA (Metamycoplasma arthritidis (strain 158L3-1) (Mycoplasma arthritidis)).